The primary structure comprises 1312 residues: Probable histone-lysine N-methyltransferase lin-59 (1312 aa).

2 stretches are compositionally biased toward polar residues: residues 1-11 (MHGAGEQQQRY) and 25-36 (STSSHQYQQQGA). 5 disordered regions span residues 1–41 (MHGA…QMHQ), 54–81 (TTTS…RQQG), 154–223 (QPSG…KPVD), 312–435 (EESK…PPPV), and 524–556 (KDNI…EPSE). Low complexity predominate over residues 54-68 (TTTSAAASTSSSGGS). Gly residues predominate over residues 69–78 (NSSGGSGGHR). The span at 160–176 (PMSSNAPATTSSATPDS) shows a compositional bias: low complexity. Positions 200 to 210 (DHDDEEDDDGP) are enriched in acidic residues. Residues 312–321 (EESKKKKDME) are compositionally biased toward basic and acidic residues. Residues 344–367 (ATRSTNSPDVTTSNLPEEPSTSTM) are compositionally biased toward polar residues. A compositionally biased stretch (basic and acidic residues) spans 371-382 (KENEDVEKVEGK). Residues 383-394 (RRGRKPKKRRGF) are compositionally biased toward basic residues. 2 stretches are compositionally biased toward basic and acidic residues: residues 395 to 419 (HKES…DHLP) and 524 to 535 (KDNIKKEVKEES). Residues 590–635 (APSLTCGCTKGACTSDMDCLNRALRVQCSSDCSVPYCSNRRFWKED) enclose the AWS domain. One can recognise an SET domain in the interval 638 to 750 (NKLCVSNGPR…PNAEITVDKS (113 aa)). A disordered region spans residues 913–934 (DNAPRARALSTSCPSPVPSKRG). The segment at 967-1027 (AVRCICGALD…EYICDFCTNK (61 aa)) adopts a PHD-type zinc-finger fold. One can recognise a BAH domain in the interval 1100–1223 (NKYRFPKAAT…KTQRVFEKVP (124 aa)). A disordered region spans residues 1248–1295 (RDFRPYDPSNPSPKPPKTSSIPSTSSIDPPQSSSDGLPEVDTKKLSKR). Low complexity predominate over residues 1264–1281 (KTSSIPSTSSIDPPQSSS).

This sequence belongs to the class V-like SAM-binding methyltransferase superfamily. Histone-lysine methyltransferase family. SET2 subfamily. As to expression, widely expressed throughout embryonic development and into adulthood.

It is found in the nucleus. It carries out the reaction L-lysyl-[histone] + S-adenosyl-L-methionine = N(6)-methyl-L-lysyl-[histone] + S-adenosyl-L-homocysteine + H(+). Probable histone methyltransferase. Essential protein required to maintain expression of homeotic genes egl-5 and mab-5. May play an analogous role to the trithorax Group (trxG) proteins. TrxG proteins form multiprotein complexes that are required to maintain the transcriptionally active state of homeotic genes throughout development. May act via a modification of chromatin. This chain is Probable histone-lysine N-methyltransferase lin-59 (lin-59), found in Caenorhabditis elegans.